A 450-amino-acid chain; its full sequence is Phosphoglucosamine mutase (450 aa).

Ser-101 acts as the Phosphoserine intermediate in catalysis. Residues Ser-101, Asp-240, Asp-242, and Asp-244 each coordinate Mg(2+). Ser-101 is modified (phosphoserine).

Belongs to the phosphohexose mutase family. Requires Mg(2+) as cofactor. In terms of processing, activated by phosphorylation.

It catalyses the reaction alpha-D-glucosamine 1-phosphate = D-glucosamine 6-phosphate. In terms of biological role, catalyzes the conversion of glucosamine-6-phosphate to glucosamine-1-phosphate. The sequence is that of Phosphoglucosamine mutase from Streptococcus equi subsp. zooepidemicus (strain H70).